A 468-amino-acid chain; its full sequence is Neuronal acetylcholine receptor subunit alpha-5 (468 aa).

An N-terminal signal peptide occupies residues 1 to 22 (MATRGSGPRAPRLLLLVQLVAG). The Extracellular segment spans residues 23-254 (RCGLAGAAGG…VIKRLPLFYT (232 aa)). 3 N-linked (GlcNAc...) asparagine glycosylation sites follow: N155, N183, and N229. A disulfide bridge connects residues C170 and C184. Residues C234 and C235 are joined by a disulfide bond. 3 consecutive transmembrane segments (helical) span residues 255 to 275 (LFLI…FYLP), 282 to 302 (ICLC…IEEI), and 317 to 337 (LVFT…AINI). The Cytoplasmic portion of the chain corresponds to 338-429 (HHRSSSTHNA…WKFIAQVLDR (92 aa)). The chain crosses the membrane as a helical span at residues 430-451 (MFLWTFLFVSIVGSLGLFVPVI). The Extracellular segment spans residues 452–468 (YKWANILIPVHIGNANK).

This sequence belongs to the ligand-gated ion channel (TC 1.A.9) family. Acetylcholine receptor (TC 1.A.9.1) subfamily. Alpha-5/CHRNA5 sub-subfamily. In terms of assembly, neuronal AChR that forms heteropentamers composed of two different type of subunits: alpha and non-alpha (beta). CHRNA5/alpha-5 subunit is only able to form functional nAChRs when co-assembled with another alpha subunit, can be combined to CHRNA4/alpha-4 or CHRNA3/alpha-3 and CHRNB4/beta-4 or CHRNB2/beta-2 to give rise to functional receptors. Interacts with LYPD6.

It localises to the synaptic cell membrane. The protein resides in the cell membrane. It catalyses the reaction Ca(2+)(in) = Ca(2+)(out). The catalysed reaction is K(+)(in) = K(+)(out). The enzyme catalyses Na(+)(in) = Na(+)(out). Its activity is regulated as follows. Activated by a myriad of ligands such as acetylcholine, cytisine, nicotine, choline and epibatidine. Functionally, component of neuronal acetylcholine receptors (nAChRs) that function as pentameric, ligand-gated cation channels with high calcium permeability among other activities. nAChRs are excitatory neurotrasnmitter receptors formed by a collection of nAChR subunits known to mediate synaptic transmission in the nervous system and the neuromuscular junction. Each nAchR subunit confers differential attributes to channel properties, including activation, deactivation and desensitization kinetics, pH sensitivity, cation permeability, and binding to allosteric modulators. Has an accessory rather than functional role and is only able to form functional nAChRs when co-assembled with another beta subunit. Participates in pentameric assemblies along with CHRNA3, CHRNA4, CHRNB2 and CHRNB4. Increases receptor sensitivity to acetylcholine and nicotine when associated with CHRNA4 and CHRNB2. Plays a role in nicotine addiction. The protein is Neuronal acetylcholine receptor subunit alpha-5 (CHRNA5) of Pan troglodytes (Chimpanzee).